The primary structure comprises 141 residues: VLSSGDKANVKSVWSKVQGHLEDYGAETLDRMFTVFPQTKTYFSHFDVHHGSTQIRSHGKKVMLALGDAVNHIDDIATALSALSDKHAHILRVDPVNFKLLSHCLLVVVARHHPTLFTPDVHVSLDKFMGTVSTVLTSKYR.

In terms of domain architecture, Globin spans V1–R141. H58 provides a ligand contact to O2. H87 is a heme b binding site.

It belongs to the globin family. In terms of assembly, heterotetramer of two alpha chains and two beta chains. Red blood cells.

Functionally, involved in oxygen transport from the lung to the various peripheral tissues. In Caretta caretta (Loggerhead sea turtle), this protein is Hemoglobin subunit alpha-A (HBAA).